The following is a 148-amino-acid chain: 3-hydroxyacyl-[acyl-carrier-protein] dehydratase FabZ (148 aa).

H55 is an active-site residue.

Belongs to the thioester dehydratase family. FabZ subfamily.

Its subcellular location is the cytoplasm. It carries out the reaction a (3R)-hydroxyacyl-[ACP] = a (2E)-enoyl-[ACP] + H2O. In terms of biological role, involved in unsaturated fatty acids biosynthesis. Catalyzes the dehydration of short chain beta-hydroxyacyl-ACPs and long chain saturated and unsaturated beta-hydroxyacyl-ACPs. The protein is 3-hydroxyacyl-[acyl-carrier-protein] dehydratase FabZ of Haemophilus influenzae (strain PittEE).